A 272-amino-acid chain; its full sequence is Alcohol dehydrogenase-related 31 kDa protein (272 aa).

Residue 11–34 (YVADCGGIALETSKVLMTKNIAKL) participates in NAD(+) binding. Position 139 (serine 139) interacts with substrate. Tyrosine 152 functions as the Proton acceptor in the catalytic mechanism.

This sequence belongs to the short-chain dehydrogenases/reductases (SDR) family.

This Drosophila mauritiana (Fruit fly) protein is Alcohol dehydrogenase-related 31 kDa protein (Adhr).